Reading from the N-terminus, the 264-residue chain is Indole-3-glycerol phosphate synthase (264 aa).

Belongs to the TrpC family.

The catalysed reaction is 1-(2-carboxyphenylamino)-1-deoxy-D-ribulose 5-phosphate + H(+) = (1S,2R)-1-C-(indol-3-yl)glycerol 3-phosphate + CO2 + H2O. Its pathway is amino-acid biosynthesis; L-tryptophan biosynthesis; L-tryptophan from chorismate: step 4/5. The protein is Indole-3-glycerol phosphate synthase of Xylella fastidiosa (strain M12).